The chain runs to 1218 residues: Protein jagged-1 (1218 aa).

The first 33 residues, 1-33, serve as a signal peptide directing secretion; the sequence is MRSPRTRGRSGRPLSLLLALLCALRAKVCGASG. The Extracellular portion of the chain corresponds to 34–1067; it reads QFELEILSMQ…QRRPLKNRTD (1034 aa). Asparagine 143 is a glycosylation site (N-linked (GlcNAc...) asparagine). Residues 185 to 229 form the DSL domain; sequence VTCDDYYYGFGCNKFCRPRDDFFGHYACDQNGNKTCMEGWMGPEC. Cystine bridges form between cysteine 187/cysteine 196 and cysteine 200/cysteine 212. Positions 199–207 are important for interaction with NOTCH1; that stretch reads FCRPRDDFF. A glycan (N-linked (GlcNAc...) asparagine) is linked at asparagine 217. Disulfide bonds link cysteine 220-cysteine 229, cysteine 234-cysteine 245, cysteine 238-cysteine 251, cysteine 253-cysteine 262, cysteine 265-cysteine 276, cysteine 271-cysteine 282, cysteine 284-cysteine 293, cysteine 300-cysteine 312, cysteine 306-cysteine 322, cysteine 324-cysteine 333, cysteine 340-cysteine 351, cysteine 345-cysteine 360, cysteine 362-cysteine 371, cysteine 378-cysteine 389, cysteine 383-cysteine 398, cysteine 400-cysteine 409, cysteine 416-cysteine 427, cysteine 421-cysteine 436, cysteine 438-cysteine 447, cysteine 454-cysteine 464, cysteine 458-cysteine 473, cysteine 475-cysteine 484, cysteine 491-cysteine 502, cysteine 496-cysteine 511, cysteine 513-cysteine 522, cysteine 529-cysteine 540, cysteine 534-cysteine 549, cysteine 551-cysteine 560, cysteine 578-cysteine 605, cysteine 599-cysteine 615, cysteine 617-cysteine 626, cysteine 633-cysteine 644, cysteine 638-cysteine 653, cysteine 655-cysteine 664, cysteine 671-cysteine 682, cysteine 676-cysteine 691, cysteine 693-cysteine 702, cysteine 709-cysteine 720, cysteine 714-cysteine 729, and cysteine 731-cysteine 740. An EGF-like 1 domain is found at 230–263; sequence NRAICRQGCSPKHGSCKLPGDCRCQYGWQGLYCD. In terms of domain architecture, EGF-like 2; atypical spans 264 to 294; it reads KCIPHPGCVHGICNEPWQCLCETNWGGQLCD. EGF-like domains are found at residues 296 to 334 and 336 to 372; these read DLNY…PNCE and AEHA…PTCS. The region spanning 374–410 is the EGF-like 5; calcium-binding domain; sequence NIDDCSPNNCSHGGTCQDLVNGFKCVCPPQWTGKTCQ. Residue asparagine 382 is glycosylated (N-linked (GlcNAc...) asparagine). The 37-residue stretch at 412–448 folds into the EGF-like 6; calcium-binding domain; the sequence is DANECEAKPCVNAKSCKNLIASYYCDCLPGWMGQNCD. The 36-residue stretch at 450–485 folds into the EGF-like 7; calcium-binding domain; that stretch reads NINDCLGQCQNDASCRDLVNGYRCICPPGYAGDHCE. In terms of domain architecture, EGF-like 8; calcium-binding spans 487 to 523; that stretch reads DIDECASNPCLNGGHCQNEINRFQCLCPTGFSGNLCQ. 2 EGF-like domains span residues 525-561 and 586-627; these read DIDY…KNCS and DTPE…TYCH. Asparagine 559 is a glycosylation site (N-linked (GlcNAc...) asparagine). The region spanning 629-665 is the EGF-like 11; calcium-binding domain; it reads NINDCESNPCRNGGTCIDGVNSYKCICSDGWEGAYCE. The EGF-like 12; calcium-binding domain occupies 667–703; it reads NINDCSQNPCHNGGTCRDLVNDFYCDCKNGWKGKTCH. 2 consecutive EGF-like domains span residues 705–741 and 744–780; these read RDSQ…TTCN and RNSS…PICA. A glycan (N-linked (GlcNAc...) asparagine) is linked at asparagine 745. 9 cysteine pairs are disulfide-bonded: cysteine 748-cysteine 759, cysteine 753-cysteine 768, cysteine 770-cysteine 779, cysteine 786-cysteine 797, cysteine 791-cysteine 806, cysteine 808-cysteine 817, cysteine 824-cysteine 835, cysteine 829-cysteine 844, and cysteine 846-cysteine 855. The EGF-like 15; calcium-binding domain maps to 782-818; the sequence is NTNDCSPHPCYNSGTCVDGDNWYRCECAPGFAGPDCR. Residues 820-856 form the EGF-like 16; calcium-binding domain; sequence NINECQSSPCAFGATCVDEINGYRCVCPPGHSGAKCQ. Asparagine 960, asparagine 991, asparagine 1045, and asparagine 1064 each carry an N-linked (GlcNAc...) asparagine glycan. A helical transmembrane segment spans residues 1068-1093; the sequence is FLVPLLSSVLTVAWICCLVTAFYWCL. Residues 1094–1218 are Cytoplasmic-facing; sequence RKRRKPGSHT…QSLNRMEYIV (125 aa). Positions 1152 to 1218 are disordered; the sequence is HNSEVEEDDM…QSLNRMEYIV (67 aa). Residues 1189-1199 are compositionally biased toward polar residues; that stretch reads TPTKHPNWTNK.

As to quaternary structure, interacts with NOTCH2 and NOTCH3. Interacts with NOTCH1 (in the presence of calcium ions). As to expression, widely expressed in adult and fetal tissues. In cervix epithelium expressed in undifferentiated subcolumnar reserve cells and squamous metaplasia. Expression is up-regulated in cervical squamous cell carcinoma. Expressed in bone marrow cell line HS-27a which supports the long-term maintenance of immature progenitor cells.

The protein localises to the membrane. The protein resides in the cell membrane. In terms of biological role, ligand for multiple Notch receptors and involved in the mediation of Notch signaling. May be involved in cell-fate decisions during hematopoiesis. Seems to be involved in early and late stages of mammalian cardiovascular development. Inhibits myoblast differentiation. Enhances fibroblast growth factor-induced angiogenesis (in vitro). In Homo sapiens (Human), this protein is Protein jagged-1 (JAG1).